We begin with the raw amino-acid sequence, 186 residues long: Ribosome-recycling factor (186 aa).

This sequence belongs to the RRF family.

Its subcellular location is the cytoplasm. Its function is as follows. Responsible for the release of ribosomes from messenger RNA at the termination of protein biosynthesis. May increase the efficiency of translation by recycling ribosomes from one round of translation to another. The chain is Ribosome-recycling factor from Ralstonia pickettii (strain 12J).